A 167-amino-acid polypeptide reads, in one-letter code: Secretion monitor (167 aa).

The N-terminal stretch at methionine 1–alanine 36 is a signal peptide.

The protein belongs to the SecM family.

The protein resides in the cytoplasm. It localises to the cytosol. The protein localises to the periplasm. Regulates secA expression by translational coupling of the secM secA operon. Translational pausing at a specific Pro residue 5 residues before the end of the protein may allow disruption of a mRNA repressor helix that normally suppresses secA translation initiation. This chain is Secretion monitor, found in Erwinia tasmaniensis (strain DSM 17950 / CFBP 7177 / CIP 109463 / NCPPB 4357 / Et1/99).